Here is a 115-residue protein sequence, read N- to C-terminus: Large ribosomal subunit protein bL19 (115 aa).

This sequence belongs to the bacterial ribosomal protein bL19 family.

Its function is as follows. This protein is located at the 30S-50S ribosomal subunit interface and may play a role in the structure and function of the aminoacyl-tRNA binding site. This chain is Large ribosomal subunit protein bL19, found in Pectobacterium atrosepticum (strain SCRI 1043 / ATCC BAA-672) (Erwinia carotovora subsp. atroseptica).